Consider the following 232-residue polypeptide: uncharacterized protein (232 aa).

Residues 1-46 (MNAHNMRGPPGDLAKVVPGSRSGWNEGSRCRQADKGDGQCRNGGRD) form a disordered region. A compositionally biased stretch (basic and acidic residues) spans 28 to 46 (SRCRQADKGDGQCRNGGRD).

This is an uncharacterized protein from Rhizobium meliloti (Ensifer meliloti).